The chain runs to 83 residues: MPNIKSAIKRVNTTHTAEERNISQKNEMRTAVKRAHSALESNADNKADLLSFALKKVDKAAQRNLIHDNKAARIKSSLMTAAK.

A disordered region spans residues 1–25 (MPNIKSAIKRVNTTHTAEERNISQK). Positions 16–25 (TAEERNISQK) are enriched in basic and acidic residues.

Belongs to the bacterial ribosomal protein bS20 family.

Binds directly to 16S ribosomal RNA. The protein is Small ribosomal subunit protein bS20 of Staphylococcus saprophyticus subsp. saprophyticus (strain ATCC 15305 / DSM 20229 / NCIMB 8711 / NCTC 7292 / S-41).